The sequence spans 415 residues: Na(+)-translocating NADH-quinone reductase subunit B (415 aa).

A run of 4 helical transmembrane segments spans residues 23 to 40 (WFAL…PGLV), 56 to 76 (IMIM…YNAG), 129 to 149 (FLPI…LFCM), and 164 to 184 (ILFA…LGIT). Position 236 is an FMN phosphoryl threonine (Thr-236). The next 5 helical transmembrane spans lie at 275–295 (VSTL…IASW), 297–317 (IIGG…VIGS), 325–345 (MPWH…FMAT), 358–378 (WAYG…NPAY), and 381–401 (GMML…HVVV).

The protein belongs to the NqrB/RnfD family. In terms of assembly, composed of six subunits; NqrA, NqrB, NqrC, NqrD, NqrE and NqrF. The cofactor is riboflavin. FMN is required as a cofactor.

Its subcellular location is the cell inner membrane. It carries out the reaction a ubiquinone + n Na(+)(in) + NADH + H(+) = a ubiquinol + n Na(+)(out) + NAD(+). NQR complex catalyzes the reduction of ubiquinone-1 to ubiquinol by two successive reactions, coupled with the transport of Na(+) ions from the cytoplasm to the periplasm. NqrA to NqrE are probably involved in the second step, the conversion of ubisemiquinone to ubiquinol. In Vibrio cholerae serotype O1 (strain ATCC 39541 / Classical Ogawa 395 / O395), this protein is Na(+)-translocating NADH-quinone reductase subunit B.